The chain runs to 1096 residues: uncharacterized protein (1096 aa).

The protein belongs to the IIV-6 261R/396L/443R family.

This is an uncharacterized protein from Invertebrate iridescent virus 3 (IIV-3).